A 455-amino-acid polypeptide reads, in one-letter code: Bifunctional protein GlmU (455 aa).

The interval 1–226 is pyrophosphorylase; it reads MALNVVILAA…AIEVEGANNR (226 aa). UDP-N-acetyl-alpha-D-glucosamine is bound by residues 8-11, Lys-22, Gln-73, 78-79, 100-102, Gly-137, Glu-151, Asn-166, and Asn-224; these read LAAG, GT, and YGD. Asp-102 contributes to the Mg(2+) binding site. Asn-224 contributes to the Mg(2+) binding site. Residues 227 to 247 are linker; it reads VQLAQLERAYQARAAEKLMLE. Residues 248-455 are N-acetyltransferase; the sequence is GANLRDPARL…WARPVKKPKS (208 aa). Arg-330 and Lys-348 together coordinate UDP-N-acetyl-alpha-D-glucosamine. Catalysis depends on His-360, which acts as the Proton acceptor. UDP-N-acetyl-alpha-D-glucosamine contacts are provided by Tyr-363 and Asn-374. Acetyl-CoA contacts are provided by residues Ala-377, 383–384, Ser-402, Ala-420, and Arg-437; that span reads NY.

In the N-terminal section; belongs to the N-acetylglucosamine-1-phosphate uridyltransferase family. The protein in the C-terminal section; belongs to the transferase hexapeptide repeat family. As to quaternary structure, homotrimer. Mg(2+) serves as cofactor.

The protein resides in the cytoplasm. The enzyme catalyses alpha-D-glucosamine 1-phosphate + acetyl-CoA = N-acetyl-alpha-D-glucosamine 1-phosphate + CoA + H(+). The catalysed reaction is N-acetyl-alpha-D-glucosamine 1-phosphate + UTP + H(+) = UDP-N-acetyl-alpha-D-glucosamine + diphosphate. Its pathway is nucleotide-sugar biosynthesis; UDP-N-acetyl-alpha-D-glucosamine biosynthesis; N-acetyl-alpha-D-glucosamine 1-phosphate from alpha-D-glucosamine 6-phosphate (route II): step 2/2. The protein operates within nucleotide-sugar biosynthesis; UDP-N-acetyl-alpha-D-glucosamine biosynthesis; UDP-N-acetyl-alpha-D-glucosamine from N-acetyl-alpha-D-glucosamine 1-phosphate: step 1/1. It functions in the pathway bacterial outer membrane biogenesis; LPS lipid A biosynthesis. In terms of biological role, catalyzes the last two sequential reactions in the de novo biosynthetic pathway for UDP-N-acetylglucosamine (UDP-GlcNAc). The C-terminal domain catalyzes the transfer of acetyl group from acetyl coenzyme A to glucosamine-1-phosphate (GlcN-1-P) to produce N-acetylglucosamine-1-phosphate (GlcNAc-1-P), which is converted into UDP-GlcNAc by the transfer of uridine 5-monophosphate (from uridine 5-triphosphate), a reaction catalyzed by the N-terminal domain. In Shewanella sediminis (strain HAW-EB3), this protein is Bifunctional protein GlmU.